Reading from the N-terminus, the 769-residue chain is Phenylalanine--tRNA ligase beta subunit (769 aa).

Positions 40–141 constitute a tRNA-binding domain; it reads GKLLTIARVA…GEPIPGCEPD (102 aa). The B5 domain maps to 389 to 467; sequence PAPPPIELPL…RMIGYDSIAP (79 aa). Mg(2+) contacts are provided by Asp445, Asp451, Glu454, and Glu455. The 93-residue stretch at 676–768 folds into the FDX-ACB domain; that stretch reads RRYPSSAFDL…GMRAKGYELR (93 aa).

This sequence belongs to the phenylalanyl-tRNA synthetase beta subunit family. Type 1 subfamily. Tetramer of two alpha and two beta subunits. Mg(2+) serves as cofactor.

The protein resides in the cytoplasm. The catalysed reaction is tRNA(Phe) + L-phenylalanine + ATP = L-phenylalanyl-tRNA(Phe) + AMP + diphosphate + H(+). This chain is Phenylalanine--tRNA ligase beta subunit, found in Solibacter usitatus (strain Ellin6076).